The sequence spans 405 residues: L-carnitine CoA-transferase (405 aa).

Lysine 97 and arginine 104 together coordinate CoA. Aspartate 169 acts as the Nucleophile in catalysis.

The protein belongs to the CoA-transferase III family. CaiB subfamily. In terms of assembly, homodimer.

It is found in the cytoplasm. The catalysed reaction is crotonobetainyl-CoA + (R)-carnitine = crotonobetaine + (R)-carnitinyl-CoA. It catalyses the reaction 4-(trimethylamino)butanoyl-CoA + (R)-carnitine = (R)-carnitinyl-CoA + 4-(trimethylamino)butanoate. It participates in amine and polyamine metabolism; carnitine metabolism. Functionally, catalyzes the reversible transfer of the CoA moiety from gamma-butyrobetainyl-CoA to L-carnitine to generate L-carnitinyl-CoA and gamma-butyrobetaine. Is also able to catalyze the reversible transfer of the CoA moiety from gamma-butyrobetainyl-CoA or L-carnitinyl-CoA to crotonobetaine to generate crotonobetainyl-CoA. The chain is L-carnitine CoA-transferase from Salmonella gallinarum (strain 287/91 / NCTC 13346).